Consider the following 526-residue polypeptide: uncharacterized protein (526 aa).

WD repeat units lie at residues 210–248 (SMEQ…HHDT) and 452–491 (SHNS…LIDS).

This is an uncharacterized protein from Acanthamoeba polyphaga mimivirus (APMV).